The primary structure comprises 48 residues: Large ribosomal subunit protein bL36c (48 aa).

Belongs to the bacterial ribosomal protein bL36 family.

The protein localises to the plastid. It is found in the chloroplast. The polypeptide is Large ribosomal subunit protein bL36c (rpl36) (Guillardia theta (Cryptophyte)).